The following is a 430-amino-acid chain: Serine--tRNA ligase (430 aa).

Residue 235–237 (TAE) coordinates L-serine. Residues 266-268 (RRE) and Val-282 each bind ATP. Glu-289 contacts L-serine. Position 353-356 (353-356 (EASS)) interacts with ATP. Ser-389 contacts L-serine.

It belongs to the class-II aminoacyl-tRNA synthetase family. Type-1 seryl-tRNA synthetase subfamily. Homodimer. The tRNA molecule binds across the dimer.

Its subcellular location is the cytoplasm. It catalyses the reaction tRNA(Ser) + L-serine + ATP = L-seryl-tRNA(Ser) + AMP + diphosphate + H(+). The enzyme catalyses tRNA(Sec) + L-serine + ATP = L-seryl-tRNA(Sec) + AMP + diphosphate + H(+). It participates in aminoacyl-tRNA biosynthesis; selenocysteinyl-tRNA(Sec) biosynthesis; L-seryl-tRNA(Sec) from L-serine and tRNA(Sec): step 1/1. Functionally, catalyzes the attachment of serine to tRNA(Ser). Is also able to aminoacylate tRNA(Sec) with serine, to form the misacylated tRNA L-seryl-tRNA(Sec), which will be further converted into selenocysteinyl-tRNA(Sec). This chain is Serine--tRNA ligase, found in Chlorobium phaeovibrioides (strain DSM 265 / 1930) (Prosthecochloris vibrioformis (strain DSM 265)).